The chain runs to 719 residues: Polyphosphate kinase (719 aa).

An ATP-binding site is contributed by N54. The Mg(2+) site is built by R379 and R409. The PLD phosphodiesterase domain maps to 434–468 (THLKTHSKIALVVKRMNNKLTSFIHLGTGNYNDKT). H439 acts as the Phosphohistidine intermediate in catalysis. ATP-binding residues include Y472, R568, and H596.

The protein belongs to the polyphosphate kinase 1 (PPK1) family. It depends on Mg(2+) as a cofactor. In terms of processing, an intermediate of this reaction is the autophosphorylated ppk in which a phosphate is covalently linked to a histidine residue through a N-P bond.

It catalyses the reaction [phosphate](n) + ATP = [phosphate](n+1) + ADP. Functionally, catalyzes the reversible transfer of the terminal phosphate of ATP to form a long-chain polyphosphate (polyP). This Staphylococcus saprophyticus subsp. saprophyticus (strain ATCC 15305 / DSM 20229 / NCIMB 8711 / NCTC 7292 / S-41) protein is Polyphosphate kinase.